An 874-amino-acid chain; its full sequence is Leucine--tRNA ligase (874 aa).

Residues 43–53 carry the 'HIGH' region motif; sequence PYPSGRIHIGH. The tract at residues 614–634 is disordered; that stretch reads LDDGSPVTVGPPEKMSKSKKN. The 'KMSKS' region signature appears at 627 to 631; it reads KMSKS. K630 provides a ligand contact to ATP.

It belongs to the class-I aminoacyl-tRNA synthetase family.

It localises to the cytoplasm. The catalysed reaction is tRNA(Leu) + L-leucine + ATP = L-leucyl-tRNA(Leu) + AMP + diphosphate. In Azorhizobium caulinodans (strain ATCC 43989 / DSM 5975 / JCM 20966 / LMG 6465 / NBRC 14845 / NCIMB 13405 / ORS 571), this protein is Leucine--tRNA ligase.